Reading from the N-terminus, the 90-residue chain is HssA/B-like protein 4 (90 aa).

The protein belongs to the hssA/B family.

The protein is HssA/B-like protein 4 (hssl4) of Dictyostelium discoideum (Social amoeba).